The primary structure comprises 219 residues: Thiamine-phosphate synthase (219 aa).

Residues 44 to 48 (QFREK) and asparagine 79 contribute to the 4-amino-2-methyl-5-(diphosphooxymethyl)pyrimidine site. Mg(2+) contacts are provided by aspartate 80 and aspartate 99. Serine 117 contributes to the 4-amino-2-methyl-5-(diphosphooxymethyl)pyrimidine binding site. 143–145 (TST) is a 2-[(2R,5Z)-2-carboxy-4-methylthiazol-5(2H)-ylidene]ethyl phosphate binding site. Lysine 146 is a binding site for 4-amino-2-methyl-5-(diphosphooxymethyl)pyrimidine. Residues glycine 175 and 195 to 196 (IS) contribute to the 2-[(2R,5Z)-2-carboxy-4-methylthiazol-5(2H)-ylidene]ethyl phosphate site.

The protein belongs to the thiamine-phosphate synthase family. It depends on Mg(2+) as a cofactor.

The catalysed reaction is 2-[(2R,5Z)-2-carboxy-4-methylthiazol-5(2H)-ylidene]ethyl phosphate + 4-amino-2-methyl-5-(diphosphooxymethyl)pyrimidine + 2 H(+) = thiamine phosphate + CO2 + diphosphate. The enzyme catalyses 2-(2-carboxy-4-methylthiazol-5-yl)ethyl phosphate + 4-amino-2-methyl-5-(diphosphooxymethyl)pyrimidine + 2 H(+) = thiamine phosphate + CO2 + diphosphate. It catalyses the reaction 4-methyl-5-(2-phosphooxyethyl)-thiazole + 4-amino-2-methyl-5-(diphosphooxymethyl)pyrimidine + H(+) = thiamine phosphate + diphosphate. The protein operates within cofactor biosynthesis; thiamine diphosphate biosynthesis; thiamine phosphate from 4-amino-2-methyl-5-diphosphomethylpyrimidine and 4-methyl-5-(2-phosphoethyl)-thiazole: step 1/1. Condenses 4-methyl-5-(beta-hydroxyethyl)thiazole monophosphate (THZ-P) and 2-methyl-4-amino-5-hydroxymethyl pyrimidine pyrophosphate (HMP-PP) to form thiamine monophosphate (TMP). This Bacillus thuringiensis (strain Al Hakam) protein is Thiamine-phosphate synthase.